The chain runs to 751 residues: Amyloid-beta precursor protein (751 aa).

The first 17 residues, 1 to 17 (MLPGLALLLLAAWTARA), serve as a signal peptide directing secretion. Topologically, residues 18-682 (LEVPTDGNAG…AEDVGSNKGA (665 aa)) are extracellular. The interval 28–123 (LLAEPQIAMF…PYRCLVGEFV (96 aa)) is GFLD subdomain. Residues 28 to 189 (LLAEPQIAMF…RGVEFVCCPL (162 aa)) form the E1 domain. 6 disulfide bridges follow: Cys-38–Cys-62, Cys-73–Cys-117, Cys-98–Cys-105, Cys-133–Cys-187, Cys-144–Cys-174, and Cys-158–Cys-186. 96–110 (NWCKRDRKQCKTHPH) provides a ligand contact to heparin. The cuBD subdomain stretch occupies residues 131–189 (DKCKFLHQERMDVCETHLHWHTVAKETCSEKSTNLHDYGMLLPCGIDKFRGVEFVCCPL). Positions 147, 151, and 168 each coordinate Cu(2+). The segment at 181 to 188 (GVEFVCCP) is zinc-binding. Positions 183, 186, and 187 each coordinate Zn(2+). Positions 195 to 284 (HVDSADAEED…TTTTTTESVE (90 aa)) are disordered. 2 positions are modified to phosphoserine; by CK1 and CK2: Ser-198 and Ser-206. Residues Tyr-217 and Tyr-262 each carry the sulfotyrosine modification. Positions 228–264 (VAEEEEVAEVEEEEADDDEDDEDGDEVEEEAEEPYEE) are enriched in acidic residues. The segment covering 268–281 (RTTSIATTTTTTTE) has biased composition (low complexity). 3 disulfide bridges follow: Cys-291-Cys-341, Cys-300-Cys-324, and Cys-316-Cys-337. In terms of domain architecture, BPTI/Kunitz inhibitor spans 291-341 (CSEQAETGPCRAMISRWYFDVTEGKCAPFFYGGCGGNRNNFDTEEYCMAVC). Heparin-binding regions lie at residues 316 to 344 (CAPF…CGSV) and 363 to 428 (PGDE…QEAA). Tyr-336 carries the post-translational modification Sulfotyrosine. The short motif at 344-346 (VIP) is the OX-2 element. The E2 domain occupies 355-546 (AVDKYLETPG…EEIQDEVDEL (192 aa)). A Phosphoserine modification is found at Ser-422. Position 478 is a phosphotyrosine (Tyr-478). Positions 504–521 (AAQIRSQVMTHLRVIYER) are collagen-binding. Asn-523 and Asn-552 each carry an N-linked (GlcNAc...) asparagine glycan. Positions 658, 662, 665, and 666 each coordinate Cu(2+). His-658, Tyr-662, His-665, and His-666 together coordinate Zn(2+). The tract at residues 676–703 (VGSNKGAIIGLMVGGVVIATVIVITLVM) is interaction with PSEN1. A helical membrane pass occupies residues 683-703 (IIGLMVGGVVIATVIVITLVM). Over 704–751 (LKKKQYTSIHHGVVEVDAAVTPEERHLSKMQQNGYENPTYKFFEQMQN) the chain is Cytoplasmic. The short motif at 705-715 (KKKQYTSIHHG) is the Basolateral sorting signal element. The residue at position 710 (Thr-710) is a Phosphothreonine. Ser-711 bears the Phosphoserine; by APP-kinase I mark. Residues 713–732 (HHGVVEVDAAVTPEERHLSK) are interaction with G(o)-alpha. Position 724 is a phosphothreonine; by CDK5 and MAPK10 (Thr-724). The tract at residues 737–751 (GYENPTYKFFEQMQN) is required for the interaction with KIF5B and for anterograde transport in axons. Phosphotyrosine; by ABL1 is present on Tyr-738. The YENPXY motif; contains endocytosis signal motif lies at 738 to 743 (YENPTY). A Glycyl lysine isopeptide (Lys-Gly) (interchain with G-Cter in ubiquitin) cross-link involves residue Lys-744.

Belongs to the APP family. As to quaternary structure, binds, via its C-terminus, to the PID domain of several cytoplasmic proteins, including APBB family members, the APBA family, MAPK8IP1, SHC1 and NUMB and DAB1. Binding to DAB1 inhibits its serine phosphorylation. Interacts (via NPXY motif) with DAB2 (via PID domain); the interaction is impaired by tyrosine phosphorylation of the NPXY motif. Also interacts with GPCR-like protein BPP, APPBP1, IB1, KNS2 (via its TPR domains), APPBP2 (via BaSS) and DDB1. In vitro, it binds MAPT via the MT-binding domains. Associates with microtubules in the presence of ATP and in a kinesin-dependent manner. Interacts, through a C-terminal domain, with GNAO1. Amyloid-beta protein 42 binds CHRNA7 in hippocampal neurons. Amyloid-beta associates with HADH2. Interacts with CPEB1, ANKS1B and AGER. Interacts with ITM2B. Interacts with ITM2C. Interacts with IDE. Can form homodimers; dimerization is enhanced in the presence of Cu(2+) ions. Can form homodimers; this is promoted by heparin binding. Amyloid-beta protein 40 interacts with S100A9. CTF-alpha product of APP interacts with GSAP. Isoform APP695 interacts with SORL1 (via N-terminal ectodomain); this interaction retains APP in the trans-Golgi network and reduces processing into soluble APP-alpha and amyloid-beta peptides. Isoform APP770 interacts with SORL1. The C99 fragment also interacts with SORL1. Interacts with PLD3. Interacts with VDAC1. Interacts with NSG1; could regulate APP processing. Amyloid-beta protein 42 interacts with FPR2. Interacts (via transmembrane region) with PSEN1; the interaction is direct. Interacts with LRRK2. Interacts (via cytoplasmic domain) with KIF5B. Interacts (via C-terminus) with APBB2/FE65L1 (via C-terminus). Interacts (via intracellular domain) with APBB3. In terms of processing, proteolytically processed under normal cellular conditions. Cleavage either by alpha-secretase, beta-secretase or theta-secretase leads to generation and extracellular release of soluble APP peptides, S-APP-alpha and S-APP-beta, and the retention of corresponding membrane-anchored C-terminal fragments, C80, C83 and C99. Subsequent processing of C80 and C83 by gamma-secretase yields P3 peptides. This is the major secretory pathway and is non-amyloidogenic. Alternatively, presenilin/nicastrin-mediated gamma-secretase processing of C99 releases the amyloid-beta proteins, amyloid-beta protein 40 and amyloid-beta protein 42, major components of amyloid plaques, and the cytotoxic C-terminal fragments, gamma-CTF(50), gamma-CTF(57) and gamma-CTF(59). PSEN1 cleavage is more efficient with C83 than with C99 as substrate (in vitro). Amyloid-beta protein 40 and Amyloid-beta protein 42 are cleaved by ACE. Many other minor amyloid-beta peptides, amyloid-beta 1-X peptides, are found in cerebral spinal fluid (CSF) including the amyloid-beta X-15 peptides, produced from the cleavage by alpha-secretase. Post-translationally, proteolytically cleaved by caspases during neuronal apoptosis. Cleavage at Asp-720 by either caspase-3, -8 or -9 results in the production of the neurotoxic C31 peptide and the increased production of amyloid-beta peptides. N- and O-glycosylated. In terms of processing, phosphorylation in the C-terminal on tyrosine, threonine and serine residues is neuron-specific. Phosphorylation can affect APP processing, neuronal differentiation and interaction with other proteins. Phosphorylated on Thr-724 in neuronal cells by Cdc5 kinase and Mapk10, in dividing cells by Cdc2 kinase in a cell-cycle dependent manner with maximal levels at the G2/M phase and, in vitro, by GSK-3-beta. The Thr-724 phosphorylated form causes a conformational change which reduces binding of Fe65 family members. In dopaminergic (DA) neurons, phosphorylation on Thr-724 by LRKK2 promotes the production and the nuclear translocation of the APP intracellular domain (AICD) which induces DA neuron apoptosis. Phosphorylation on Tyr-738 is required for SHC binding. Phosphorylated in the extracellular domain by casein kinases on both soluble and membrane-bound APP. This phosphorylation is inhibited by heparin. Post-translationally, trophic-factor deprivation triggers the cleavage of surface APP by beta-secretase to release sAPP-beta which is further cleaved to release an N-terminal fragment of APP (N-APP). Amyloid-beta peptides are degraded by IDE. In terms of processing, sulfated on tyrosine residues.

The protein resides in the cell membrane. It localises to the membrane. The protein localises to the perikaryon. Its subcellular location is the cell projection. It is found in the growth cone. The protein resides in the clathrin-coated pit. It localises to the early endosome. The protein localises to the cytoplasmic vesicle. Its subcellular location is the endoplasmic reticulum. It is found in the golgi apparatus. The protein resides in the secreted. It localises to the cell surface. The protein localises to the nucleus. Its subcellular location is the cytoplasm. Its function is as follows. Functions as a cell surface receptor and performs physiological functions on the surface of neurons relevant to neurite growth, neuronal adhesion and axonogenesis. Interaction between APP molecules on neighboring cells promotes synaptogenesis. Involved in cell mobility and transcription regulation through protein-protein interactions. Can promote transcription activation through binding to APBB1-KAT5 and inhibit Notch signaling through interaction with Numb. Couples to apoptosis-inducing pathways such as those mediated by G(o) and JIP. Inhibits G(o)-alpha ATPase activity. Acts as a kinesin I membrane receptor, mediating the axonal transport of beta-secretase and presenilin 1. By acting as a kinesin I membrane receptor, plays a role in axonal anterograde transport of cargo towards synapses in axons. May be involved in copper homeostasis/oxidative stress through copper ion reduction. In vitro, copper-metallated APP induces neuronal death directly or is potentiated through Cu(2+)-mediated low-density lipoprotein oxidation. Can regulate neurite outgrowth through binding to components of the extracellular matrix such as heparin and collagen I and IV. Induces a AGER-dependent pathway that involves activation of p38 MAPK, resulting in internalization of amyloid-beta peptide and mitochondrial dysfunction in cultured cortical neurons. Provides Cu(2+) ions for GPC1 which are required for release of nitric oxide (NO) and subsequent degradation of the heparan sulfate chains on GPC1. Amyloid-beta peptides are lipophilic metal chelators with metal-reducing activity. Binds transient metals such as copper, zinc and iron. In terms of biological role, the gamma-CTF peptides as well as the caspase-cleaved peptides, including C31, are potent enhancers of neuronal apoptosis. This chain is Amyloid-beta precursor protein, found in Saimiri sciureus (Common squirrel monkey).